The primary structure comprises 570 residues: Hydroxylamine reductase (570 aa).

Residues cysteine 5, cysteine 8, cysteine 17, and cysteine 23 each coordinate [4Fe-4S] cluster. Positions 266, 290, 334, 425, 453, 478, 513, and 515 each coordinate hybrid [4Fe-2O-2S] cluster. The residue at position 425 (cysteine 425) is a Cysteine persulfide.

This sequence belongs to the HCP family. It depends on [4Fe-4S] cluster as a cofactor. Requires hybrid [4Fe-2O-2S] cluster as cofactor.

Its subcellular location is the cytoplasm. The catalysed reaction is A + NH4(+) + H2O = hydroxylamine + AH2 + H(+). Functionally, catalyzes the reduction of hydroxylamine to form NH(3) and H(2)O. This chain is Hydroxylamine reductase, found in Clostridium botulinum (strain Kyoto / Type A2).